Consider the following 544-residue polypeptide: MPMETETNQGDLIFRSKLPDIYIPKHLPLHSYCFENISEFSSRPCLINGANNHIYTYADVELTSRKVAAGLNKLGIQQKDTIMILLPNSPEFVFAFMGASYLGAISTMANPLFTPAEVVKQAKASNAKLIITQACFVNKVKDYAFDNNLNVICIDSAPEGCIHFSELTQADEHDIPDVKIQSDDVVALPYSSGTTGLPKGVMLTHKGLVTSVAQQVDGENANLYMHSEDVLMCVLPLFHIYSLNSVLLCGLRVGAAILIMQKFDIVQFCELIEKYKVTIGPFVPPIVLAIAKSPVVDNYDLSSVRTVMSGAAPLGKELEDAVRIKFPNAKLGQGYGMTEAGPVLAMCLAFAKEPFDIKSGACGTVVRNAEMKIVDPDTGCSLPRNQPGEICIRGDQIMKGYLNDPAATTRTIDKEGWLHTGDIGYIDNDDELFIVDRLKELIKYKGFQVAPAELEALLLNHPNISDAAVVPMKDEQAGEVPVAFVVRSNGSDITEDEVKDFVSKQVIFYKRIKRVFFVETVPKSPSGKILRKDLRARLAAGVPN.

The protein belongs to the ATP-dependent AMP-binding enzyme family. Monomer. As to expression, mostly expressed in flower organs, with highest levels in corollas, and, to a lesser extent, in tubes, sepals, pistils, stamen and ovaries. Also present at low levels in leaves.

Its subcellular location is the cytoplasm. It is found in the cytosol. It carries out the reaction (E)-4-coumarate + ATP + CoA = (E)-4-coumaroyl-CoA + AMP + diphosphate. The catalysed reaction is (E)-caffeate + ATP + CoA = (E)-caffeoyl-CoA + AMP + diphosphate. The enzyme catalyses benzoate + ATP + CoA = benzoyl-CoA + AMP + diphosphate. It catalyses the reaction (E)-cinnamate + ATP + CoA = (E)-cinnamoyl-CoA + AMP + diphosphate. It carries out the reaction (E)-ferulate + ATP + CoA = (E)-feruloyl-CoA + AMP + diphosphate. Its pathway is phenylpropanoid metabolism; trans-cinnamate biosynthesis. The protein operates within phytoalexin biosynthesis; 3,4',5-trihydroxystilbene biosynthesis; 3,4',5-trihydroxystilbene from trans-4-coumarate: step 1/2. Its function is as follows. Catalyzes the formation of CoA esters of trans-cinnamic acid, 4-coumaric acid, ferulic acid, benzoic acid and caffeic acid. This chain is 4-coumarate:CoA ligase 1, found in Petunia hybrida (Petunia).